The sequence spans 156 residues: ATP synthase subunit b (156 aa).

The helical transmembrane segment at 12 to 32 threads the bilayer; it reads VAFFIFVIFCMKFVWPPVIAA.

Belongs to the ATPase B chain family. As to quaternary structure, F-type ATPases have 2 components, F(1) - the catalytic core - and F(0) - the membrane proton channel. F(1) has five subunits: alpha(3), beta(3), gamma(1), delta(1), epsilon(1). F(0) has three main subunits: a(1), b(2) and c(10-14). The alpha and beta chains form an alternating ring which encloses part of the gamma chain. F(1) is attached to F(0) by a central stalk formed by the gamma and epsilon chains, while a peripheral stalk is formed by the delta and b chains.

The protein localises to the cell inner membrane. F(1)F(0) ATP synthase produces ATP from ADP in the presence of a proton or sodium gradient. F-type ATPases consist of two structural domains, F(1) containing the extramembraneous catalytic core and F(0) containing the membrane proton channel, linked together by a central stalk and a peripheral stalk. During catalysis, ATP synthesis in the catalytic domain of F(1) is coupled via a rotary mechanism of the central stalk subunits to proton translocation. In terms of biological role, component of the F(0) channel, it forms part of the peripheral stalk, linking F(1) to F(0). This chain is ATP synthase subunit b, found in Pseudomonas savastanoi pv. phaseolicola (strain 1448A / Race 6) (Pseudomonas syringae pv. phaseolicola (strain 1448A / Race 6)).